A 156-amino-acid polypeptide reads, in one-letter code: Protein FAM162A (156 aa).

The tract at residues T37–S57 is disordered. Residues R78–K104 form a required for proapoptotic activity region. A helical transmembrane segment spans residues I105–I122.

The protein belongs to the UPF0389 family. In terms of assembly, interacts with HSP90AB1; HSP90AB1 is essential for FAM162A mitochondrial localization and pro-apoptotic activity. Interacts with VDAC2; the interaction is probably involved in inducing mitochondrial permeability transition.

The protein localises to the mitochondrion membrane. Functionally, proposed to be involved in regulation of apoptosis; the exact mechanism may differ between cell types/tissues. May be involved in hypoxia-induced cell death of transformed cells implicating cytochrome C release and caspase activation (such as CASP9) and inducing mitochondrial permeability transition. May be involved in hypoxia-induced cell death of neuronal cells probably by promoting release of AIFM1 from mitochondria to cytoplasm and its translocation to the nucleus; however, the involvement of caspases has been reported conflictingly. The chain is Protein FAM162A (FAM162A) from Bos taurus (Bovine).